The chain runs to 251 residues: MTEQKITFADQKRKTVEIAEFTEDGRYKRKVRSFVLRTGRLSEFQRNMMNNNWATLGLEYQTTAFDFTQIYGNTNPVILEIGFGMGKSLVEMALQNPDKNYLGIEVHTPGVGACIAYAVEKQVKNLRVICHDATEILQDCIADNSLAGLQLFFPDPWHKTKHHKRRIVQPHFVEKIQQKLVPNGFVHMATDWENYAEYMLEVLTSAVGLHNTSATNDYIPRPDFRPLTKFEQRGHKLGHGVWDLFFIKNIT.

The S-adenosyl-L-methionine site is built by E80, E105, D132, and D155. D155 is a catalytic residue. Substrate contacts are provided by residues K159, D191, and 228–231 (TKFE).

The protein belongs to the class I-like SAM-binding methyltransferase superfamily. TrmB family.

It catalyses the reaction guanosine(46) in tRNA + S-adenosyl-L-methionine = N(7)-methylguanosine(46) in tRNA + S-adenosyl-L-homocysteine. Its pathway is tRNA modification; N(7)-methylguanine-tRNA biosynthesis. Catalyzes the formation of N(7)-methylguanine at position 46 (m7G46) in tRNA. The protein is tRNA (guanine-N(7)-)-methyltransferase of Histophilus somni (strain 2336) (Haemophilus somnus).